The primary structure comprises 279 residues: Acyl-[acyl-carrier-protein]--UDP-N-acetylglucosamine O-acyltransferase (279 aa).

The interval Ile-256 to Ser-279 is disordered.

Belongs to the transferase hexapeptide repeat family. LpxA subfamily. In terms of assembly, homotrimer.

The protein localises to the cytoplasm. It carries out the reaction a (3R)-hydroxyacyl-[ACP] + UDP-N-acetyl-alpha-D-glucosamine = a UDP-3-O-[(3R)-3-hydroxyacyl]-N-acetyl-alpha-D-glucosamine + holo-[ACP]. It participates in glycolipid biosynthesis; lipid IV(A) biosynthesis; lipid IV(A) from (3R)-3-hydroxytetradecanoyl-[acyl-carrier-protein] and UDP-N-acetyl-alpha-D-glucosamine: step 1/6. Its function is as follows. Involved in the biosynthesis of lipid A, a phosphorylated glycolipid that anchors the lipopolysaccharide to the outer membrane of the cell. The sequence is that of Acyl-[acyl-carrier-protein]--UDP-N-acetylglucosamine O-acyltransferase from Chlamydia caviae (strain ATCC VR-813 / DSM 19441 / 03DC25 / GPIC) (Chlamydophila caviae).